The chain runs to 354 residues: Uroporphyrinogen decarboxylase (354 aa).

Residues 27–31, Asp-77, Tyr-154, Thr-209, and His-327 each bind substrate; that span reads RQAGR.

This sequence belongs to the uroporphyrinogen decarboxylase family. Homodimer.

It localises to the cytoplasm. The enzyme catalyses uroporphyrinogen III + 4 H(+) = coproporphyrinogen III + 4 CO2. The protein operates within porphyrin-containing compound metabolism; protoporphyrin-IX biosynthesis; coproporphyrinogen-III from 5-aminolevulinate: step 4/4. Its function is as follows. Catalyzes the decarboxylation of four acetate groups of uroporphyrinogen-III to yield coproporphyrinogen-III. This chain is Uroporphyrinogen decarboxylase, found in Salmonella agona (strain SL483).